The following is a 488-amino-acid chain: Ribulose bisphosphate carboxylase large chain 1 (488 aa).

Substrate is bound by residues asparagine 128 and threonine 178. Lysine 180 serves as the catalytic Proton acceptor. Lysine 182 provides a ligand contact to substrate. Residues lysine 206, aspartate 208, and glutamate 209 each contribute to the Mg(2+) site. Lysine 206 carries the N6-carboxylysine modification. Histidine 298 (proton acceptor) is an active-site residue. Substrate is bound by residues arginine 299, histidine 331, and serine 383.

The protein belongs to the RuBisCO large chain family. Type I subfamily. In terms of assembly, heterohexadecamer of 8 large chains and 8 small chains. Mg(2+) serves as cofactor.

It carries out the reaction 2 (2R)-3-phosphoglycerate + 2 H(+) = D-ribulose 1,5-bisphosphate + CO2 + H2O. It catalyses the reaction D-ribulose 1,5-bisphosphate + O2 = 2-phosphoglycolate + (2R)-3-phosphoglycerate + 2 H(+). Functionally, ruBisCO catalyzes two reactions: the carboxylation of D-ribulose 1,5-bisphosphate, the primary event in carbon dioxide fixation, as well as the oxidative fragmentation of the pentose substrate. Both reactions occur simultaneously and in competition at the same active site. The sequence is that of Ribulose bisphosphate carboxylase large chain 1 from Nitrobacter hamburgensis (strain DSM 10229 / NCIMB 13809 / X14).